Here is a 127-residue protein sequence, read N- to C-terminus: MRGAGAILRPAARGARDLNPRRDISSWLAQWFPRTPARSVVALKTPIKVELVAGKTYRWCVCGRSKKQPFCDGSHFFQRTGLSPLKFKAQETRMVALCTCKATQRPPYCDGTHRSERVQKAEVGSPL.

Residues 1-14 (MRGAGAILRPAARG) constitute a mitochondrion transit peptide. N6-acetyllysine; alternate is present on Lys-55. The residue at position 55 (Lys-55) is an N6-succinyllysine; alternate. [2Fe-2S] cluster is bound by residues Cys-60, Cys-62, Cys-71, and His-75. Lys-86 bears the N6-acetyllysine mark. [2Fe-2S] cluster contacts are provided by Cys-98, Cys-100, Cys-109, and His-113.

This sequence belongs to the CISD protein family. As to quaternary structure, monomer. The cofactor is [2Fe-2S] cluster.

The protein resides in the mitochondrion. In terms of biological role, can transfer its iron-sulfur clusters to the apoferrodoxins FDX1 and FDX2. Contributes to mitochondrial iron homeostasis and in maintaining normal levels of free iron and reactive oxygen species, and thereby contributes to normal mitochondrial function. The chain is CDGSH iron-sulfur domain-containing protein 3, mitochondrial (CISD3) from Homo sapiens (Human).